The primary structure comprises 71 residues: Potassium voltage-gated channel subfamily E member 2 (71 aa).

The chain crosses the membrane as a helical span at residues 7–27; it reads VILYLMVMIGMFSFIIVAILV. The Cytoplasmic portion of the chain corresponds to 28–71; it reads STVKSKRREHSNDPYHQYIVEDWQEKYKSQILHFEEAKATIHEN.

The protein belongs to the potassium channel KCNE family. As to quaternary structure, interacts with KCNB1. Associates with KCNH2/ERG1. May associate with KCNQ2 and KCNQ3. Associates with HCN1 and probably HCN2. Heteromultimer with KCNC2. Interacts with KCNC2. Interacts with KCNQ1; forms a heterooligomer complex that targets to the membrane raft and leading to currents with an apparently instantaneous activation, a rapid deactivation process and a linear current-voltage relationship and decreases the amplitude of the outward current. As to expression, detected in heart; expression is highest in the SA node and the right atrium, and barely detectable in the ventricle.

The protein resides in the cell membrane. It is found in the apical cell membrane. In terms of biological role, ancillary protein that functions as a regulatory subunit of the voltage-gated potassium (Kv) channel complex composed of pore-forming and potassium-conducting alpha subunits and of regulatory beta subunits. KCNE2 beta subunit modulates the gating kinetics and enhances stability of the channel complex. Alters the gating of the delayed rectifier Kv channel containing KCNB1 alpha subunit. Associates with KCNH2/HERG alpha subunit Kv channel to form the rapidly activating component of the delayed rectifying potassium current (IKr) in heart. May associate with KCNQ2 and/or KCNQ3 alpha subunits to modulate the native M-type current. May associate with HCN1 and HCN2 channel subunits to increase potassium current. Forms a heterooligomer complex with KCNQ1/KVLQT1 alpha subunits which leads to currents with an apparently instantaneous activation, a rapid deactivation process and a linear current-voltage relationship and decreases the amplitude of the outward current. KCNQ1-KCNE2 channel associates with Na(+)-coupled myo-inositol symporter in the apical membrane of choroid plexus epithelium and regulates the myo-inositol gradient between blood and cerebrospinal fluid with an impact on neuron excitability. The protein is Potassium voltage-gated channel subfamily E member 2 (KCNE2) of Oryctolagus cuniculus (Rabbit).